A 176-amino-acid polypeptide reads, in one-letter code: MNFELIYVSSLLLGICLANQADVVPSDCNLPADAGMCYAYFPMFFYDASSRKCLNFIYGGCGGNANRFWSEAECMEKCGGGGGGGGSSDGSQKTAKMLNLDLGDICSLEKKVGPCKAHMPRYYFNRETGLCEEFIYGGCSGNHNNFQTKEQCESFCAPGNSPRPEEETRKRTKQSY.

Residues 1-18 form the signal peptide; the sequence is MNFELIYVSSLLLGICLA. 2 consecutive BPTI/Kunitz inhibitor domains span residues 28-78 and 106-156; these read CNLP…MEKC and CSLE…ESFC. Disulfide bonds link Cys-28-Cys-78, Cys-37-Cys-61, Cys-53-Cys-74, Cys-106-Cys-156, Cys-115-Cys-139, and Cys-131-Cys-152. The tract at residues 155-176 is disordered; the sequence is FCAPGNSPRPEEETRKRTKQSY.

It belongs to the venom Kunitz-type family. As to expression, expressed by the venom gland.

It localises to the secreted. Its function is as follows. Serine protease inhibitor that inhibits trypsin at a molar ratio of 1:1. The protein is Kunitz-type U19-barytoxin-Tl1a of Trittame loki (Brush-footed trapdoor spider).